A 515-amino-acid chain; its full sequence is 2,3-bisphosphoglycerate-independent phosphoglycerate mutase 1 (515 aa).

Residues Asp14 and Ser64 each contribute to the Mn(2+) site. Ser64 acts as the Phosphoserine intermediate in catalysis. Substrate contacts are provided by residues His125, 155–156 (RD), Arg187, Arg193, 264–267 (RADR), and Lys337. Positions 404, 408, 445, 446, and 464 each coordinate Mn(2+).

This sequence belongs to the BPG-independent phosphoglycerate mutase family. Requires Mn(2+) as cofactor.

The catalysed reaction is (2R)-2-phosphoglycerate = (2R)-3-phosphoglycerate. It participates in carbohydrate degradation; glycolysis; pyruvate from D-glyceraldehyde 3-phosphate: step 3/5. Functionally, catalyzes the interconversion of 2-phosphoglycerate and 3-phosphoglycerate. This Methanosarcina acetivorans (strain ATCC 35395 / DSM 2834 / JCM 12185 / C2A) protein is 2,3-bisphosphoglycerate-independent phosphoglycerate mutase 1.